We begin with the raw amino-acid sequence, 373 residues long: Chaperone protein DnaJ (373 aa).

In terms of domain architecture, J spans 4 to 69; the sequence is NYYEILEISQ…EKRSIYDRYG (66 aa). The CR-type zinc-finger motif lies at 133 to 210; it reads GCKKKIDFSY…CHGNGYEEIK (78 aa). Residues cysteine 146, cysteine 149, cysteine 162, cysteine 165, cysteine 184, cysteine 187, cysteine 198, and cysteine 201 each contribute to the Zn(2+) site. CXXCXGXG motif repeat units lie at residues 146 to 153, 162 to 169, 184 to 191, and 198 to 205; these read CKSCKGSG, CPHCGGKG, CDHCKGSG, and CKTCHGNG.

Belongs to the DnaJ family. Homodimer. It depends on Zn(2+) as a cofactor.

The protein resides in the cytoplasm. Functionally, participates actively in the response to hyperosmotic and heat shock by preventing the aggregation of stress-denatured proteins and by disaggregating proteins, also in an autonomous, DnaK-independent fashion. Unfolded proteins bind initially to DnaJ; upon interaction with the DnaJ-bound protein, DnaK hydrolyzes its bound ATP, resulting in the formation of a stable complex. GrpE releases ADP from DnaK; ATP binding to DnaK triggers the release of the substrate protein, thus completing the reaction cycle. Several rounds of ATP-dependent interactions between DnaJ, DnaK and GrpE are required for fully efficient folding. Also involved, together with DnaK and GrpE, in the DNA replication of plasmids through activation of initiation proteins. In Campylobacter lari (strain RM2100 / D67 / ATCC BAA-1060), this protein is Chaperone protein DnaJ.